The sequence spans 217 residues: Homeobox protein Hox-B7 (217 aa).

The Antp-type hexapeptide motif lies at 126 to 131 (IYPWMR). A DNA-binding region (homeobox) is located at residues 137–196 (RKRGRQTYTRYQTLELEKEFHYNRYLTRRRRIEIAHTLCLTERQIKIWFQNRRMKWKKEN). The interval 194–217 (KENKTAGPGTTGQDRAEAEEEEEE) is disordered.

The protein belongs to the Antp homeobox family. As to quaternary structure, forms a DNA-binding heterodimer with transcription factor PBX1.

The protein resides in the nucleus. In terms of biological role, sequence-specific transcription factor which is part of a developmental regulatory system that provides cells with specific positional identities on the anterior-posterior axis. This is Homeobox protein Hox-B7 (HOXB7) from Homo sapiens (Human).